A 294-amino-acid chain; its full sequence is uncharacterized protein (294 aa).

3 helical membrane passes run 21 to 41 (AIVA…TFTF), 51 to 71 (PIIW…LWAA), and 77 to 97 (ILFS…VFLF). Residues 156 to 176 (HPVPFPAEPGSPDPVSPPPPI) are disordered. Residues 184 to 215 (ERAESLHAGNIELAEDLQRIQEMERNLENERS) adopt a coiled-coil conformation. Positions 265–277 (QQENESRLEERRF) are enriched in basic and acidic residues. The segment at 265-294 (QQENESRLEERRFQSHSTNSLFEADSSRDN) is disordered.

Its subcellular location is the mitochondrion membrane. This is an uncharacterized protein from Arabidopsis thaliana (Mouse-ear cress).